The chain runs to 110 residues: UPF0060 membrane protein Bcen_0802 (110 aa).

The next 4 helical transmembrane spans lie at 9 to 29 (ALFAATALAEIVGCYLPWLVL), 34 to 54 (PAWLLVPAALSLALFAWLLTL), 66 to 86 (YGGVYIAVALIWLRVVDGVAL), and 88 to 108 (RWDVAGAVLALGGMAVIALQP).

This sequence belongs to the UPF0060 family.

It localises to the cell inner membrane. This is UPF0060 membrane protein Bcen_0802 from Burkholderia orbicola (strain AU 1054).